The primary structure comprises 210 residues: Cell division protein FtsQ (210 aa).

The POTRA domain occupies 1–58; the sequence is LQTSEIEVFQLLGLDGSTSLIALDIDAARRKLVQLPWVEDVDIRKVYPKTVEVRLKER. The helical transmembrane segment at 8-25 threads the bilayer; the sequence is VFQLLGLDGSTSLIALDI.

It belongs to the FtsQ/DivIB family. FtsQ subfamily.

Its subcellular location is the cell inner membrane. Functionally, essential cell division protein. This chain is Cell division protein FtsQ, found in Rhizobium radiobacter (Agrobacterium tumefaciens).